Here is a 504-residue protein sequence, read N- to C-terminus: L-carnitine/gamma-butyrobetaine antiporter (504 aa).

Transmembrane regions (helical) follow at residues 10-30 (IEPKVFFPPLIIVGILCWLTV), 51-71 (WGWAFEWYMVVMLFGWFWLVF), 92-112 (IFMMFASCTSAAVLFWGSIEI), 143-163 (GPLPWATYSFLSVAFAYFFFV), 195-215 (FYLVALIFAMGTSLGLATPLV), 231-251 (LDAIIITCWIILNAICVACGL), 263-283 (SYLSFLMLGWVFIVSGASFIM), 316-336 (WTVFYWAWWVIYAIQMSIFLA), 347-367 (LCFGMVMGLTASTWILWTVLG), 403-423 (LSTATMWGFFILCFIATVTLI), 446-466 (LLVRIGWSILVGIIGIVLLAL), and 475-495 (AIIAGGCPLFFVNIMVTLSFI).

This sequence belongs to the BCCT transporter (TC 2.A.15) family. CaiT subfamily. As to quaternary structure, homotrimer.

Its subcellular location is the cell inner membrane. The catalysed reaction is 4-(trimethylamino)butanoate(in) + (R)-carnitine(out) = 4-(trimethylamino)butanoate(out) + (R)-carnitine(in). The protein operates within amine and polyamine metabolism; carnitine metabolism. In terms of biological role, catalyzes the exchange of L-carnitine for gamma-butyrobetaine. This is L-carnitine/gamma-butyrobetaine antiporter from Escherichia fergusonii (strain ATCC 35469 / DSM 13698 / CCUG 18766 / IAM 14443 / JCM 21226 / LMG 7866 / NBRC 102419 / NCTC 12128 / CDC 0568-73).